The sequence spans 140 residues: Lymphocyte antigen 6H (140 aa).

Residues 1 to 25 form the signal peptide; it reads MLPAAMKGLGLVLLAALLCSSPAHG. In terms of domain architecture, UPAR/Ly6 spans 26–91; sequence LWCQDCTLTT…RHFFSDYLMG (66 aa). Cystine bridges form between Cys-28–Cys-52, Cys-31–Cys-40, Cys-45–Cys-73, Cys-77–Cys-104, and Cys-105–Cys-110. Asn-36 is a glycosylation site (N-linked (GlcNAc...) asparagine).

The protein resides in the cell membrane. This is Lymphocyte antigen 6H (LY6H) from Bos taurus (Bovine).